Reading from the N-terminus, the 507-residue chain is ATP synthase subunit alpha, chloroplastic (507 aa).

Position 170–177 (170–177 (GDRQTGKT)) interacts with ATP. Ser383 is modified (phosphoserine).

This sequence belongs to the ATPase alpha/beta chains family. As to quaternary structure, F-type ATPases have 2 components, CF(1) - the catalytic core - and CF(0) - the membrane proton channel. CF(1) has five subunits: alpha(3), beta(3), gamma(1), delta(1), epsilon(1). CF(0) has four main subunits: a, b, b' and c. In terms of processing, only phosphorylated in mesophyll cells, and only when cells are grown under high rather than low light regimes (70 vs 900 umol photons/m-2/s).

The protein resides in the plastid. The protein localises to the chloroplast thylakoid membrane. It carries out the reaction ATP + H2O + 4 H(+)(in) = ADP + phosphate + 5 H(+)(out). Produces ATP from ADP in the presence of a proton gradient across the membrane. The alpha chain is a regulatory subunit. The polypeptide is ATP synthase subunit alpha, chloroplastic (Zea mays (Maize)).